Reading from the N-terminus, the 509-residue chain is Probable triacylglyceride transporter ML0556 (509 aa).

13 helical membrane passes run 48-68, 78-98, 112-132, 146-166, 171-191, 203-223, 232-252, 272-292, 309-329, 339-359, 381-403, 410-430, and 477-497; these read RITW…PLLS, LLLQ…ALAG, IQGV…ADLW, AAQE…VWLF, YVFW…QVSL, VDVV…IGLY, VLPS…VAFA, PFLS…VTLV, AAGL…LGGW, MTFV…HWPV, LLVA…LRVV, IASA…VAAL, and IFMI…LISS.

Belongs to the major facilitator superfamily.

The protein resides in the cell inner membrane. In terms of biological role, in association with lipoprotein LprG probably transports triacylglycerides (TAG) across the inner cell membrane into the periplasm; TAG probably regulates lipid metabolism and growth regulation. May be an efflux transporter and involved in maintaining correct cell wall permeability. Probably required with LprG for normal surface localization of lipoarabinomannan (LAM). This Mycobacterium leprae (strain TN) protein is Probable triacylglyceride transporter ML0556.